A 1293-amino-acid chain; its full sequence is Late blight resistance protein R1-A (1293 aa).

Coiled-coil stretches lie at residues 423–446 and 538–560; these read RYSD…ESLQ and PRMN…KLLN. The NB-ARC domain maps to 539–826; that stretch reads RMNEEIVGFE…SEAFIKSSEG (288 aa). Residue 572-579 coordinates ATP; the sequence is GMPGLGKT. LRR repeat units follow at residues 876–899, 956–981, 1027–1049, 1056–1079, 1102–1125, 1149–1172, 1175–1197, 1198–1222, and 1235–1259; these read AEEN…VYSH, FKFL…VYLK, MVKL…LLEN, LETL…KTPN, PIRL…ISAP, LKHL…KVSN, FPQL…ADDA, FPNL…FMDI, and ESVV…NFKL.

This sequence belongs to the disease resistance NB-LRR family.

The protein localises to the cytoplasm. It is found in the membrane. Functionally, confers resistance to late blight (Phytophthora infestans) races carrying the avirulence gene Avr1. Resistance proteins guard the plant against pathogens that contain an appropriate avirulence protein via an indirect interaction with this avirulence protein. That triggers a defense system including the hypersensitive response, which restricts the pathogen growth. In Solanum demissum (Wild potato), this protein is Late blight resistance protein R1-A (R1A).